A 203-amino-acid polypeptide reads, in one-letter code: ATP-dependent Clp protease proteolytic subunit (203 aa).

The active-site Nucleophile is the S107. H132 is a catalytic residue.

It belongs to the peptidase S14 family. Fourteen ClpP subunits assemble into 2 heptameric rings which stack back to back to give a disk-like structure with a central cavity, resembling the structure of eukaryotic proteasomes.

The protein resides in the cytoplasm. The catalysed reaction is Hydrolysis of proteins to small peptides in the presence of ATP and magnesium. alpha-casein is the usual test substrate. In the absence of ATP, only oligopeptides shorter than five residues are hydrolyzed (such as succinyl-Leu-Tyr-|-NHMec, and Leu-Tyr-Leu-|-Tyr-Trp, in which cleavage of the -Tyr-|-Leu- and -Tyr-|-Trp bonds also occurs).. Its function is as follows. Cleaves peptides in various proteins in a process that requires ATP hydrolysis. Has a chymotrypsin-like activity. Plays a major role in the degradation of misfolded proteins. The polypeptide is ATP-dependent Clp protease proteolytic subunit (Shewanella loihica (strain ATCC BAA-1088 / PV-4)).